The following is a 1580-amino-acid chain: MWPSQLLVFMMLLAPIIHGGKHSERHPALASPLRHAERGPGGALPPRHLLQQPAAERATAHRGPGPRGATRGVRGPGAHGAQISAQAFSRAPIPMAVVRRELSCESYPIELRCPGTDVIMIESANYGRTDDKICDSDPAQMENIRCYLPDAYKIMSQRCNNRTQCAVVAGPDVFPDPCPGTYKYLEVQYECVPYKVEQKVFLCPGLLKGVYQSEHLFESDHQSGAWCKDPLQASDKIYYMPWTPYRTDTLTEYSSKDDFIAGRPTTTYKLPHRVDGTGFVVYDGALFFNKERTRNIVKFDLRTRIKSGEAIIANANYHDTSPYRWGGKSDIDLAVDENGLWVIYATEQNNGKIVISQLNPYTLRIEGTWDTAYDKRSASNAFMICGILYVVKSVYEDDDNEATGNKIDYIYNTDQSKDSLVDVPFPNSYQYIAAVDYNPRDNLLYVWNNYHVVKYSLDFGPLDSRSGQAHHGQVSYISPPIHLDSDLERPPVREISTTGPLGTGSTTTSTTLRTTTWSPGRSTTPSVSGRRNRSTSTPSPAIEVLNDITTHVPSASPQIPALEESCEAVEAREIMWFKTRQGQMAKQPCPAGTIGVSTYLCLAPDGIWDPQGPDLSNCSSPWVNHITQKLKSGETAANIARELAEQTRNHLNAGDITYSVRAMDQLVGLLDVQLRNLTPGGKDSAARSLNKLQKRERSCRAYVQAMVETVNNLLQPQALNAWRDLTTSDQLRAATMLLDTVEESAFVLADNLLKTDIVRENTDNIQLEVARLSTEGNLEDLKFPENTGHGSTIQLSANTLKQNGRNGEIRVAFVLYNNLGPYLSTENASMKLGTEAMSTNHSVIVNSPVITAAINKEFSNKVYLADPVVFTVKHIKQSEENFNPNCSFWSYSKRTMTGYWSTQGCRLLTTNKTHTTCSCNHLTNFAVLMAHVEVKHSDAVHDLLLDVITWVGILLSLVCLLICIFTFCFFRGLQSDRNTIHKNLCISLFVAELLFLIGINRTDQPIACAVFAALLHFFFLAAFTWMFLEGVQLYIMLVEVFESEHSRRKYFYLVGYGMPALIVAVSAAVDYRSYGTDKVCWLRLDTYFIWSFIGPATLIIMLNVIFLGIALYKMFHHTAILKPESGCLDNINYEDNRPFIKSWVIGAIALLCLLGLTWAFGLMYINESTVIMAYLFTIFNSLQGMFIFIFHCVLQKKVRKEYGKCLRTHCCSGRSTESSIGSGKTSGSRTPGRYSTGSQSRIRRMWNDTVRKQSESSFITGDINSSASLNRGAMANHLISNALLRPHGTNNPYNTLLGEPAVCNNPSVSMYNAQEGLLNNARDTSVMDTLPLNGNHGNSYSIASGEYLSNCVQIIDRGYNHNETALEKKILKELTSNYIPSYLNNHERSSEQNRNLMNKLVNNLGSGSEDDAIVLDDATSFNHEESLGLELIHEESDAPLLPPRVYSTENHQLHHYTRRRIPQDHSESFFPLLTNEHTEDLQSPHRDSLYTSMPALAGVPTAESVTTSTQTEPPPAKCGDAEDVYYKSMPNLGSRNHVHQLHTYYQLGRGSSDGFIVPPNKDGTPPEGSSKGPAHLVTSL.

The signal sequence occupies residues 1-19; the sequence is MWPSQLLVFMMLLAPIIHG. Topologically, residues 20–949 are extracellular; it reads GKHSERHPAL…VHDLLLDVIT (930 aa). Positions 23-81 are disordered; the sequence is SERHPALASPLRHAERGPGGALPPRHLLQQPAAERATAHRGPGPRGATRGVRGPGAHGA. Positions 103–192 constitute an SUEL-type lectin domain; it reads SCESYPIELR…KYLEVQYECV (90 aa). Intrachain disulfides connect Cys-104/Cys-134, Cys-113/Cys-191, Cys-146/Cys-178, Cys-159/Cys-165, and Cys-203/Cys-385. N-linked (GlcNAc...) asparagine glycosylation occurs at Asn-161. Residues 202-461 form the Olfactomedin-like domain; it reads LCPGLLKGVY…VVKYSLDFGP (260 aa). The interaction with FLRT3 stretch occupies residues 317–347; that stretch reads YHDTSPYRWGGKSDIDLAVDENGLWVIYATE. Residues Asp-332, Asn-380, Ala-381, and Val-435 each contribute to the Ca(2+) site. The disordered stretch occupies residues 494 to 540; the sequence is EISTTGPLGTGSTTTSTTLRTTTWSPGRSTTPSVSGRRNRSTSTPSP. The span at 496–521 shows a compositional bias: low complexity; that stretch reads STTGPLGTGSTTTSTTLRTTTWSPGR. Residues 522 to 539 are compositionally biased toward polar residues; it reads STTPSVSGRRNRSTSTPS. Residues Asn-532, Asn-617, Asn-827, Asn-840, Asn-885, and Asn-911 are each glycosylated (N-linked (GlcNAc...) asparagine). One can recognise a GAIN-B domain in the interval 756–935; the sequence is DIVRENTDNI…AVLMAHVEVK (180 aa). 2 disulfides stabilise this stretch: Cys-886–Cys-917 and Cys-905–Cys-919. The segment at 886–935 is GPS; that stretch reads CSFWSYSKRTMTGYWSTQGCRLLTTNKTHTTCSCNHLTNFAVLMAHVEVK. The tract at residues 923-939 is stachel; sequence TNFAVLMAHVEVKHSDA. Residues 950–970 form a helical membrane-spanning segment; sequence WVGILLSLVCLLICIFTFCFF. At 971–978 the chain is on the cytoplasmic side; it reads RGLQSDRN. Residues 979–999 traverse the membrane as a helical segment; the sequence is TIHKNLCISLFVAELLFLIGI. Asn-1000 carries N-linked (GlcNAc...) asparagine glycosylation. The Extracellular segment spans residues 1000–1007; sequence NRTDQPIA. A helical membrane pass occupies residues 1008–1028; that stretch reads CAVFAALLHFFFLAAFTWMFL. Over 1029–1050 the chain is Cytoplasmic; it reads EGVQLYIMLVEVFESEHSRRKY. A helical transmembrane segment spans residues 1051–1071; sequence FYLVGYGMPALIVAVSAAVDY. Topologically, residues 1072 to 1088 are extracellular; the sequence is RSYGTDKVCWLRLDTYF. The helical transmembrane segment at 1089–1109 threads the bilayer; the sequence is IWSFIGPATLIIMLNVIFLGI. Residues 1110–1142 are Cytoplasmic-facing; that stretch reads ALYKMFHHTAILKPESGCLDNINYEDNRPFIKS. The chain crosses the membrane as a helical span at residues 1143 to 1163; the sequence is WVIGAIALLCLLGLTWAFGLM. The Extracellular portion of the chain corresponds to 1164–1169; the sequence is YINEST. Asn-1166 carries N-linked (GlcNAc...) asparagine glycosylation. The helical transmembrane segment at 1170 to 1190 threads the bilayer; the sequence is VIMAYLFTIFNSLQGMFIFIF. Over 1191–1580 the chain is Cytoplasmic; it reads HCVLQKKVRK…KGPAHLVTSL (390 aa). A disordered region spans residues 1213–1238; the sequence is GRSTESSIGSGKTSGSRTPGRYSTGS. Ser-1254 is subject to Phosphoserine. The tract at residues 1555-1580 is disordered; that stretch reads FIVPPNKDGTPPEGSSKGPAHLVTSL. A PDZ-binding motif is present at residues 1575–1580; sequence HLVTSL.

Belongs to the G-protein coupled receptor 2 family. LN-TM7 subfamily. Heterodimer of 2 chains generated by proteolytic processing; the large extracellular N-terminal fragment and the membrane-bound C-terminal fragment predominantly remain associated and non-covalently linked. Interacts (via olfactomedin-like domain) with FLRT1 (via extracellular domain). Interacts (via olfactomedin-like domain) with FLRT2 (via extracellular domain). Interacts (via olfactomedin-like domain) with FLRT3 (via extracellular domain); the interaction is direct. Interacts (via extracellular domain) with TENM1. Interacts (via extracellular domain) with TENM2. Interacts (via extracellular domain) with TENM3. Identified in a complex with FLRT3 and UNC5B; does not interact with UNC5B by itself. Identified in a complex with FLRT3 and UNC5D; does not interact with UNC5D by itself. In terms of assembly, interacts (via PDZ-binding motif) with SHANK3. Interacts (via PDZ-binding motif) with DLG4. Post-translationally, autoproteolytically processed at the GPS region of the GAIN-B domain; this cleavage modulates receptor activity. In terms of tissue distribution, brain-specific distribution but low levels are also detected in lung and spleen.

The protein localises to the cell membrane. It is found in the postsynaptic cell membrane. It localises to the cell projection. Its subcellular location is the axon. The protein resides in the cell junction. With respect to regulation, forms a heterodimer of 2 chains generated by proteolytic processing that remain associated through non-covalent interactions mediated by the GAIN-B domain. In the inactivated receptor, the Stachel sequence (also named stalk) is embedded in the GAIN-B domain, where it adopts a beta-strand conformation. On activation, the Stachel moves into the 7 transmembrane region and adopts a twisted hook-shaped configuration that forms contacts within the receptor, leading to coupling of a G-alpha protein, which activates signaling. The cleaved GAIN-B and N-terminal domains can then dissociate from the rest of the receptor. Its function is as follows. Orphan adhesion G-protein coupled receptor (aGPCR), which mediates synapse specificity. Ligand binding causes a conformation change that triggers signaling via guanine nucleotide-binding proteins (G proteins) and modulates the activity of downstream effectors. ADGRL3 is coupled with different classes of G alpha proteins, such as G(12)/G(13), G(s), G(i) or G(q), depending on the context. Coupling to G(12)/G(13) G proteins, which mediates the activation Rho small GTPases is the most efficient. Following G-protein coupled receptor activation, associates with cell adhesion molecules that are expressed at the surface of adjacent cells to direct synapse specificity. Specifically mediates the establishment of Schaffer-collateral synapses formed by CA3-region axons on CA1-region pyramidal neurons in the hippocampus. Localizes to postsynaptic spines in excitatory synapses in the S.oriens and S.radiatum and interacts with presynaptic cell adhesion molecules FLRT3 and TENM2, promoting synapse formation. Plays a role in the development of glutamatergic synapses in the cortex. Important in determining the connectivity rates between the principal neurons in the cortex. Functionally, orphan adhesion G-protein coupled receptor (aGPCR), which mediates synapse specificity. Ligand binding causes a conformation change that triggers signaling via guanine nucleotide-binding proteins (G proteins) and modulates the activity of downstream effectors, such as adenylate cyclase. Isoform 1 is specifically coupled to G(s) G proteins and mediates activation of adenylate cyclase activity. Following G-protein coupled receptor activation, undergoes liquid-liquid phase transition, associates with (1) cell adhesion molecules that are expressed at the surface of adjacent cells, as well as (2) PDZ-containing proteins, such as SHANK3 and DLG4, in the cytoplasm to direct synapse formation. The chain is Adhesion G protein-coupled receptor L3 from Bos taurus (Bovine).